We begin with the raw amino-acid sequence, 300 residues long: Ornithine carbamoyltransferase (300 aa).

Carbamoyl phosphate is bound by residues 49–52 (STRT), Gln-76, Arg-100, and 127–130 (HPCQ). Residues Asn-158, Asp-218, and 222–223 (SM) contribute to the L-ornithine site. Residues 258–259 (CL) and Arg-286 contribute to the carbamoyl phosphate site.

Belongs to the aspartate/ornithine carbamoyltransferase superfamily. OTCase family.

It localises to the cytoplasm. The catalysed reaction is carbamoyl phosphate + L-ornithine = L-citrulline + phosphate + H(+). The protein operates within amino-acid biosynthesis; L-arginine biosynthesis; L-arginine from L-ornithine and carbamoyl phosphate: step 1/3. Functionally, reversibly catalyzes the transfer of the carbamoyl group from carbamoyl phosphate (CP) to the N(epsilon) atom of ornithine (ORN) to produce L-citrulline. The polypeptide is Ornithine carbamoyltransferase (Oleidesulfovibrio alaskensis (strain ATCC BAA-1058 / DSM 17464 / G20) (Desulfovibrio alaskensis)).